Consider the following 74-residue polypeptide: MLVFYALLFVSVFSNTVMGATIDMPIPKPILREAIEEIDVNKRADSHYCKEENCPPGKHCPKVPIVCRRGPCCF.

An N-terminal signal peptide occupies residues 1 to 19; that stretch reads MLVFYALLFVSVFSNTVMG. A propeptide spanning residues 20–41 is cleaved from the precursor; sequence ATIDMPIPKPILREAIEEIDVN.

This sequence belongs to the scoloptoxin-07 family. In terms of processing, contains 3 disulfide bonds. Expressed by the venom gland.

It localises to the secreted. Inhibits voltage-gated potassium channels. This chain is Kappa-scoloptoxin(07)-Ssm2e, found in Scolopendra mutilans (Chinese red-headed centipede).